The sequence spans 186 residues: Serine hydrolase RBBP9 (186 aa).

An involved in binding to RB1 region spans residues 63–67 (LHCDE). Residues Ser-75, Asp-138, and His-165 each act as charge relay system in the active site.

It belongs to the RBBP9 family. As to quaternary structure, interacts with RB1; the interaction disrupts RB1 binding to E2F1. Interacts with RBL1 and RBL2. As to expression, expressed at higher levels in tumor tissues such as carcinoma.

It carries out the reaction valacyclovir + H2O = acyclovir + L-valine + H(+). With respect to regulation, inhibited by the natural product emetine produced by the ipecac root. Its function is as follows. Serine hydrolase. Catalyzes the hydrolytic activation of amino acid ester of the antiviral prodrug valacyclovir to its corresponding active drug, acyclovir. May negatively regulate basal or autocrine TGF-beta signaling by suppressing SMAD2-SMAD3 phosphorylation. May play a role in the transformation process due to its capacity to confer resistance to the growth-inhibitory effects of TGF-beta through interaction with RB1 and the subsequent displacement of E2F1. The sequence is that of Serine hydrolase RBBP9 from Homo sapiens (Human).